A 525-amino-acid chain; its full sequence is Phosphoenolpyruvate carboxykinase (ATP) 1 (525 aa).

3 residues coordinate substrate: arginine 55, tyrosine 190, and lysine 196. Residues lysine 196, histidine 215, and 231-239 (GLSGTGKTT) each bind ATP. The Mn(2+) site is built by lysine 196 and histidine 215. Aspartate 252 lines the Mn(2+) pocket. 3 residues coordinate ATP: glutamate 280, arginine 317, and threonine 442. Arginine 317 is a substrate binding site.

Belongs to the phosphoenolpyruvate carboxykinase (ATP) family. Mn(2+) serves as cofactor.

Its subcellular location is the cytoplasm. The enzyme catalyses oxaloacetate + ATP = phosphoenolpyruvate + ADP + CO2. Its pathway is carbohydrate biosynthesis; gluconeogenesis. In terms of biological role, involved in the gluconeogenesis. Catalyzes the conversion of oxaloacetate (OAA) to phosphoenolpyruvate (PEP) through direct phosphoryl transfer between the nucleoside triphosphate and OAA. The sequence is that of Phosphoenolpyruvate carboxykinase (ATP) 1 from Moorella thermoacetica (strain ATCC 39073 / JCM 9320).